A 158-amino-acid polypeptide reads, in one-letter code: 6,7-dimethyl-8-ribityllumazine synthase (158 aa).

Residues phenylalanine 22, 57–59 (AVE), and 81–83 (AVI) contribute to the 5-amino-6-(D-ribitylamino)uracil site. 86-87 (GT) provides a ligand contact to (2S)-2-hydroxy-3-oxobutyl phosphate. Histidine 89 acts as the Proton donor in catalysis. Phenylalanine 114 provides a ligand contact to 5-amino-6-(D-ribitylamino)uracil. Residue arginine 128 coordinates (2S)-2-hydroxy-3-oxobutyl phosphate.

It belongs to the DMRL synthase family. Forms an icosahedral capsid composed of 60 subunits, arranged as a dodecamer of pentamers.

The catalysed reaction is (2S)-2-hydroxy-3-oxobutyl phosphate + 5-amino-6-(D-ribitylamino)uracil = 6,7-dimethyl-8-(1-D-ribityl)lumazine + phosphate + 2 H2O + H(+). Its pathway is cofactor biosynthesis; riboflavin biosynthesis; riboflavin from 2-hydroxy-3-oxobutyl phosphate and 5-amino-6-(D-ribitylamino)uracil: step 1/2. In terms of biological role, catalyzes the formation of 6,7-dimethyl-8-ribityllumazine by condensation of 5-amino-6-(D-ribitylamino)uracil with 3,4-dihydroxy-2-butanone 4-phosphate. This is the penultimate step in the biosynthesis of riboflavin. In Shewanella frigidimarina (strain NCIMB 400), this protein is 6,7-dimethyl-8-ribityllumazine synthase.